The sequence spans 1486 residues: Chromosome partition protein MukB (1486 aa).

Residue 34-41 (GGNGAGKS) coordinates ATP. 3 coiled-coil regions span residues 326–418 (LEAD…QYNQ), 444–480 (LETF…QAYQ), and 509–603 (RHLA…RAPV). The flexible hinge stretch occupies residues 666–783 (PGGSEDQRLN…EVPLFGRAAR (118 aa)). Coiled coils occupy residues 835–923 (EAEI…AKLE), 977–1115 (EMLS…TAKA), and 1209–1266 (VEAI…QNVS).

This sequence belongs to the SMC family. MukB subfamily. Homodimerization via its hinge domain. Binds to DNA via its C-terminal region. Interacts, and probably forms a ternary complex, with MukE and MukF via its C-terminal region. The complex formation is stimulated by calcium or magnesium. Interacts with tubulin-related protein FtsZ.

The protein resides in the cytoplasm. Its subcellular location is the nucleoid. Functionally, plays a central role in chromosome condensation, segregation and cell cycle progression. Functions as a homodimer, which is essential for chromosome partition. Involved in negative DNA supercoiling in vivo, and by this means organize and compact chromosomes. May achieve or facilitate chromosome segregation by condensation DNA from both sides of a centrally located replisome during cell division. The protein is Chromosome partition protein MukB of Escherichia coli O6:H1 (strain CFT073 / ATCC 700928 / UPEC).